Here is a 141-residue protein sequence, read N- to C-terminus: Hemoglobin subunit alpha-A (141 aa).

The 141-residue stretch at 1 to 141 (VLSSHDKSNV…VGTVLTAKYR (141 aa)) folds into the Globin domain. His-58 provides a ligand contact to O2. A heme b-binding site is contributed by His-87.

The protein belongs to the globin family. Heterotetramer of two alpha chains and two beta chains. As to expression, red blood cells.

Its function is as follows. Involved in oxygen transport from the lung to the various peripheral tissues. In Phoenicopterus ruber (American flamingo), this protein is Hemoglobin subunit alpha-A (HBAA).